A 342-amino-acid chain; its full sequence is Periplasmic protein TorT (342 aa).

The signal sequence occupies residues 1–18 (MRVLLFLLLSLFMLPAFS).

This sequence belongs to the bacterial solute-binding protein 2 family.

It is found in the periplasm. Upon binding a putative inducer it probably interacts with TorS and allows it to play a role in the induction of the torCAD operon for trimethylamine N-oxide reductase. This is Periplasmic protein TorT (torT) from Escherichia coli (strain K12).